The primary structure comprises 128 residues: Glycine cleavage system H protein (128 aa).

The 83-residue stretch at 22–104 (TVLVGITDYA…YGEGWIFRLK (83 aa)) folds into the Lipoyl-binding domain. An N6-lipoyllysine modification is found at K63.

The protein belongs to the GcvH family. The glycine cleavage system is composed of four proteins: P, T, L and H. Monomer. (R)-lipoate serves as cofactor.

Its function is as follows. The glycine cleavage system catalyzes the degradation of glycine. The H protein shuttles the methylamine group of glycine from the P protein to the T protein. This chain is Glycine cleavage system H protein, found in Thermus thermophilus (strain ATCC 27634 / DSM 579 / HB8).